Reading from the N-terminus, the 254-residue chain is Adenosylcobinamide-GDP ribazoletransferase (254 aa).

The next 7 membrane-spanning stretches (helical) occupy residues 29 to 49 (LFWF…LGYF), 50 to 70 (TSLL…GIAL), 98 to 118 (IMKD…MMLL), 121 to 141 (IAIL…GVLL), 170 to 190 (AGVV…FPLL), 198 to 218 (LYAV…TGLL), and 230 to 250 (VLGA…ALSA).

It belongs to the CobS family. The cofactor is Mg(2+).

The protein resides in the cell inner membrane. It carries out the reaction alpha-ribazole + adenosylcob(III)inamide-GDP = adenosylcob(III)alamin + GMP + H(+). It catalyses the reaction alpha-ribazole 5'-phosphate + adenosylcob(III)inamide-GDP = adenosylcob(III)alamin 5'-phosphate + GMP + H(+). The protein operates within cofactor biosynthesis; adenosylcobalamin biosynthesis; adenosylcobalamin from cob(II)yrinate a,c-diamide: step 7/7. Functionally, joins adenosylcobinamide-GDP and alpha-ribazole to generate adenosylcobalamin (Ado-cobalamin). Also synthesizes adenosylcobalamin 5'-phosphate from adenosylcobinamide-GDP and alpha-ribazole 5'-phosphate. In Pelodictyon phaeoclathratiforme (strain DSM 5477 / BU-1), this protein is Adenosylcobinamide-GDP ribazoletransferase.